Here is a 372-residue protein sequence, read N- to C-terminus: Ca(2+)/H(+) antiporter (372 aa).

11 helical membrane-spanning segments follow: residues 7-27 (IFLV…LGWG), 29-49 (TTVF…MGTA), 62-82 (GGLL…YIAL), 94-114 (LTGS…FLGG), 134-154 (MNLG…STGV), 162-182 (LSVA…VFSM), 222-242 (LWTG…ELLV), 251-271 (SLGL…GNAA), 294-314 (GSSL…GWAI), 320-340 (LNFN…VNSI), and 352-372 (ILLL…PTLV).

This sequence belongs to the Ca(2+):cation antiporter (CaCA) (TC 2.A.19) family. Cation/proton exchanger (CAX) subfamily.

The protein localises to the cell inner membrane. Its function is as follows. Ca(+)/H(+) antiporter that extrudes calcium in exchange for external protons. Plays an important role in salt tolerance. Does not transport sodium or lithium. The sequence is that of Ca(2+)/H(+) antiporter from Synechocystis sp. (strain ATCC 27184 / PCC 6803 / Kazusa).